We begin with the raw amino-acid sequence, 213 residues long: Pyrrolidone-carboxylate peptidase (213 aa).

Residues glutamate 81, cysteine 144, and histidine 166 contribute to the active site.

This sequence belongs to the peptidase C15 family. In terms of assembly, homotetramer.

The protein localises to the cytoplasm. The enzyme catalyses Release of an N-terminal pyroglutamyl group from a polypeptide, the second amino acid generally not being Pro.. In terms of biological role, removes 5-oxoproline from various penultimate amino acid residues except L-proline. The protein is Pyrrolidone-carboxylate peptidase of Pseudomonas fluorescens (strain SBW25).